Here is a 249-residue protein sequence, read N- to C-terminus: MPIPVFFNQQYPTLVDICARWQLVYDANATFELRFESDTLSLHNRDEPKLDGIVVDFVTGAVAHRRKFGGGRGQSIAKAVGLKQGVTPKVVDGTAGLGRDAFVLASLGCTVTMVERHPVVAALLEDGLRRAYQDAEIGDWMRERMQLFHGSSLEALAKLEQGVDVVYLDPMYPHRDKSALVKKEMRVFQTLVGADLDADGLLAPAMALASKRVVVKRPDYAEDLAGVKPSMVIETKKNRFDVYVKSAMK.

S-adenosyl-L-methionine contacts are provided by residues 99-100, 115-116, 151-152, and D169; these read RD, ER, and SS.

The protein belongs to the methyltransferase superfamily. RsmJ family.

The protein localises to the cytoplasm. The catalysed reaction is guanosine(1516) in 16S rRNA + S-adenosyl-L-methionine = N(2)-methylguanosine(1516) in 16S rRNA + S-adenosyl-L-homocysteine + H(+). Functionally, specifically methylates the guanosine in position 1516 of 16S rRNA. The sequence is that of Ribosomal RNA small subunit methyltransferase J from Shewanella oneidensis (strain ATCC 700550 / JCM 31522 / CIP 106686 / LMG 19005 / NCIMB 14063 / MR-1).